The chain runs to 291 residues: Acetyl-coenzyme A carboxylase carboxyl transferase subunit beta (291 aa).

Residues 23 to 291 (VYTKDPVSGE…TPASASVAKS (269 aa)) enclose the CoA carboxyltransferase N-terminal domain.

Belongs to the AccD/PCCB family. As to quaternary structure, acetyl-CoA carboxylase is a heterohexamer composed of biotin carboxyl carrier protein (AccB), biotin carboxylase (AccC) and two subunits each of ACCase subunit alpha (AccA) and ACCase subunit beta (AccD).

The protein localises to the cytoplasm. It carries out the reaction N(6)-carboxybiotinyl-L-lysyl-[protein] + acetyl-CoA = N(6)-biotinyl-L-lysyl-[protein] + malonyl-CoA. Its pathway is lipid metabolism; malonyl-CoA biosynthesis; malonyl-CoA from acetyl-CoA: step 1/1. Its function is as follows. Component of the acetyl coenzyme A carboxylase (ACC) complex. Biotin carboxylase (BC) catalyzes the carboxylation of biotin on its carrier protein (BCCP) and then the CO(2) group is transferred by the transcarboxylase to acetyl-CoA to form malonyl-CoA. The polypeptide is Acetyl-coenzyme A carboxylase carboxyl transferase subunit beta (Opitutus terrae (strain DSM 11246 / JCM 15787 / PB90-1)).